Consider the following 201-residue polypeptide: ADP-ribosylation factor-related protein 1 (201 aa).

Met-1 carries the N-acetylmethionine modification. GTP-binding positions include 24–31 (GLDNAGKT), 75–79 (DLGGQ), and 134–137 (NKQD).

This sequence belongs to the small GTPase superfamily. Arf family. Interacts with SYS1.

It localises to the golgi apparatus. Its subcellular location is the trans-Golgi network. In terms of biological role, trans-Golgi-associated GTPase that regulates protein sorting. Controls the targeting of ARL1 and its effector to the trans-Golgi. Required for the lipidation of chylomicrons in the intestine and required for VLDL lipidation in the liver. The sequence is that of ADP-ribosylation factor-related protein 1 (Arfrp1) from Mus musculus (Mouse).